The primary structure comprises 465 residues: Cysteine--tRNA ligase (465 aa).

Cys27 is a binding site for Zn(2+). Residues Pro29–Asn39 carry the 'HIGH' region motif. Zn(2+) is bound by residues Cys207, His232, and Glu236. The 'KMSKS' region signature appears at Lys264–Ser268. Lys267 provides a ligand contact to ATP.

This sequence belongs to the class-I aminoacyl-tRNA synthetase family. Monomer. Requires Zn(2+) as cofactor.

The protein resides in the cytoplasm. The catalysed reaction is tRNA(Cys) + L-cysteine + ATP = L-cysteinyl-tRNA(Cys) + AMP + diphosphate. The chain is Cysteine--tRNA ligase from Clostridium botulinum (strain Okra / Type B1).